A 284-amino-acid chain; its full sequence is Exosome complex component MTR3 (284 aa).

Belongs to the RNase PH family. As to quaternary structure, component of the RNA exosome complex.

Its subcellular location is the cytoplasm. The protein resides in the nucleus. It localises to the nucleolus. In terms of biological role, non-catalytic component of the RNA exosome complex which has 3'-&gt;5' exoribonuclease activity and participates in a multitude of cellular RNA processing and degradation events. The chain is Exosome complex component MTR3 (MTR3) from Chaetomium thermophilum (strain DSM 1495 / CBS 144.50 / IMI 039719) (Thermochaetoides thermophila).